Reading from the N-terminus, the 292-residue chain is Elongation factor Ts (292 aa).

Residues 79 to 82 form an involved in Mg(2+) ion dislocation from EF-Tu region; that stretch reads TDFV.

It belongs to the EF-Ts family.

It localises to the cytoplasm. Associates with the EF-Tu.GDP complex and induces the exchange of GDP to GTP. It remains bound to the aminoacyl-tRNA.EF-Tu.GTP complex up to the GTP hydrolysis stage on the ribosome. This is Elongation factor Ts from Malacoplasma penetrans (strain HF-2) (Mycoplasma penetrans).